A 768-amino-acid polypeptide reads, in one-letter code: Phosphoribosylformylglycinamidine synthase subunit PurL (768 aa).

The active site involves H44. The ATP site is built by Y47 and K86. E88 contributes to the Mg(2+) binding site. Substrate is bound by residues 89–92 (SHNH) and R111. Residue H90 is the Proton acceptor of the active site. D112 contacts Mg(2+). Q235 contributes to the substrate binding site. D263 lines the Mg(2+) pocket. Residue 307–309 (ESQ) coordinates substrate. ATP contacts are provided by D518 and G555. N556 is a Mg(2+) binding site. Position 558 (S558) interacts with substrate.

The protein belongs to the FGAMS family. In terms of assembly, monomer. Part of the FGAM synthase complex composed of 1 PurL, 1 PurQ and 2 PurS subunits.

Its subcellular location is the cytoplasm. The catalysed reaction is N(2)-formyl-N(1)-(5-phospho-beta-D-ribosyl)glycinamide + L-glutamine + ATP + H2O = 2-formamido-N(1)-(5-O-phospho-beta-D-ribosyl)acetamidine + L-glutamate + ADP + phosphate + H(+). It participates in purine metabolism; IMP biosynthesis via de novo pathway; 5-amino-1-(5-phospho-D-ribosyl)imidazole from N(2)-formyl-N(1)-(5-phospho-D-ribosyl)glycinamide: step 1/2. Its function is as follows. Part of the phosphoribosylformylglycinamidine synthase complex involved in the purines biosynthetic pathway. Catalyzes the ATP-dependent conversion of formylglycinamide ribonucleotide (FGAR) and glutamine to yield formylglycinamidine ribonucleotide (FGAM) and glutamate. The FGAM synthase complex is composed of three subunits. PurQ produces an ammonia molecule by converting glutamine to glutamate. PurL transfers the ammonia molecule to FGAR to form FGAM in an ATP-dependent manner. PurS interacts with PurQ and PurL and is thought to assist in the transfer of the ammonia molecule from PurQ to PurL. The sequence is that of Phosphoribosylformylglycinamidine synthase subunit PurL from Synechococcus sp. (strain JA-2-3B'a(2-13)) (Cyanobacteria bacterium Yellowstone B-Prime).